The primary structure comprises 701 residues: DNA-directed RNA polymerase subunit beta' (701 aa).

Positions 76, 78, 94, and 97 each coordinate Zn(2+). Mg(2+) is bound by residues Asp511, Asp513, and Asp515.

This sequence belongs to the RNA polymerase beta' chain family. RpoC1 subfamily. As to quaternary structure, in plastids the minimal PEP RNA polymerase catalytic core is composed of four subunits: alpha, beta, beta', and beta''. When a (nuclear-encoded) sigma factor is associated with the core the holoenzyme is formed, which can initiate transcription. The cofactor is Mg(2+). Zn(2+) is required as a cofactor.

The protein localises to the plastid. Its subcellular location is the chloroplast. It catalyses the reaction RNA(n) + a ribonucleoside 5'-triphosphate = RNA(n+1) + diphosphate. Its function is as follows. DNA-dependent RNA polymerase catalyzes the transcription of DNA into RNA using the four ribonucleoside triphosphates as substrates. The chain is DNA-directed RNA polymerase subunit beta' from Pelargonium hortorum (Common geranium).